The following is a 111-amino-acid chain: MNTIQNIQQLREFLTVYNTLSERCFNACARDYTTSTLTKDEGSCVSQCIDKQMLVNRRFMLVFAEQAPKALFKQGEQSPTEAIKSAKPEPAVPAPEATPVETTPVIEENKQ.

Positions 24–48 (CFNACARDYTTSTLTKDEGSCVSQC) match the Twin CX3C motif motif. Disulfide bonds link Cys24–Cys48 and Cys28–Cys44. A disordered region spans residues 73–111 (KQGEQSPTEAIKSAKPEPAVPAPEATPVETTPVIEENKQ). Residues 94–105 (APEATPVETTPV) show a composition bias toward low complexity.

The protein belongs to the small Tim family. In terms of assembly, component of the TIM22 complex, whose core is composed of tim-22, associated with peripheral protein tin-9.2/tim-10b and the 70 kDa heterohexamer. In most cases, the 70 kDa complex is composed of TIMM9 and TIMM10.

It localises to the mitochondrion inner membrane. In terms of biological role, component of the TIM22 complex, a complex that mediates the import and insertion of multi-pass transmembrane proteins into the mitochondrial inner membrane. The TIM22 complex forms a twin-pore translocase that uses the membrane potential as the external driving force. In the TIM22 complex, it may act as a docking point for the soluble 70 kDa complex that guides the target proteins in transit through the aqueous mitochondrial intermembrane space. In Caenorhabditis elegans, this protein is Mitochondrial import inner membrane translocase subunit Tim10B (tin-9.2).